The following is a 281-amino-acid chain: Pantothenate synthetase (281 aa).

26–33 (MGSLHEGH) lines the ATP pocket. Residue histidine 33 is the Proton donor of the active site. (R)-pantoate is bound at residue glutamine 57. Beta-alanine is bound at residue glutamine 57. An ATP-binding site is contributed by 144 to 147 (GKKD). Glutamine 150 contacts (R)-pantoate. ATP-binding positions include alanine 173 and 181-184 (LSSR).

Belongs to the pantothenate synthetase family. In terms of assembly, homodimer.

It localises to the cytoplasm. It catalyses the reaction (R)-pantoate + beta-alanine + ATP = (R)-pantothenate + AMP + diphosphate + H(+). The protein operates within cofactor biosynthesis; (R)-pantothenate biosynthesis; (R)-pantothenate from (R)-pantoate and beta-alanine: step 1/1. Functionally, catalyzes the condensation of pantoate with beta-alanine in an ATP-dependent reaction via a pantoyl-adenylate intermediate. The polypeptide is Pantothenate synthetase (Methylibium petroleiphilum (strain ATCC BAA-1232 / LMG 22953 / PM1)).